A 176-amino-acid polypeptide reads, in one-letter code: Large ribosomal subunit protein uL10 (176 aa).

It belongs to the universal ribosomal protein uL10 family. In terms of assembly, part of the ribosomal stalk of the 50S ribosomal subunit. The N-terminus interacts with L11 and the large rRNA to form the base of the stalk. The C-terminus forms an elongated spine to which L12 dimers bind in a sequential fashion forming a multimeric L10(L12)X complex.

Forms part of the ribosomal stalk, playing a central role in the interaction of the ribosome with GTP-bound translation factors. In Hahella chejuensis (strain KCTC 2396), this protein is Large ribosomal subunit protein uL10.